Consider the following 146-residue polypeptide: Cytochrome c-type biogenesis protein CcmE (146 aa).

Over 1 to 7 the chain is Cytoplasmic; the sequence is MQAKHQR. A helical; Signal-anchor for type II membrane protein transmembrane segment spans residues 8-28; that stretch reads LILGIIALAAVIAAGFLALVA. Residues 29 to 146 are Periplasmic-facing; it reads FKKQAAYFFT…AATQTTLQEK (118 aa). Residues histidine 123 and tyrosine 127 each coordinate heme.

The protein belongs to the CcmE/CycJ family.

It is found in the cell inner membrane. Functionally, heme chaperone required for the biogenesis of c-type cytochromes. Transiently binds heme delivered by CcmC and transfers the heme to apo-cytochromes in a process facilitated by CcmF and CcmH. The sequence is that of Cytochrome c-type biogenesis protein CcmE from Zymomonas mobilis subsp. mobilis (strain ATCC 31821 / ZM4 / CP4).